Consider the following 1061-residue polypeptide: DNA polymerase (1061 aa).

Residues 773–792 (NSEAEESDEDQGPAPFYSPP) form a disordered region.

It belongs to the DNA polymerase type-B family. Heterodimer with the terminal protein; this heterodimer binds to bp 9 to 18 of the genome. Forms a complex with viral pTP, DBP and hosts NFIA and POU2F1/OCT1 for initiation of replication.

It localises to the host nucleus. It carries out the reaction DNA(n) + a 2'-deoxyribonucleoside 5'-triphosphate = DNA(n+1) + diphosphate. Its function is as follows. Eukaryotic-type DNA polymerase involved in viral genomic replication. DNA synthesis is protein primed, and acts in a strand displacement replication. Assembles in complex with viral pTP, DBP, host NFIA and host POU2F1/OCT1 on viral origin of replication. The polymerase covalently transfers dCMP onto pTP, thereby initiating complementary strand synthesis. The protein is DNA polymerase of Human adenovirus A serotype 12 (HAdV-12).